Consider the following 468-residue polypeptide: Protein DML1 (468 aa).

The protein belongs to the misato family.

It localises to the mitochondrion. Involved in the partitioning of the mitochondrial organelle and mitochondrial DNA (mtDNA) inheritance. The chain is Protein DML1 (DML1) from Kluyveromyces lactis (strain ATCC 8585 / CBS 2359 / DSM 70799 / NBRC 1267 / NRRL Y-1140 / WM37) (Yeast).